The chain runs to 33 residues: Kappa-sparatoxin-Hv1a (33 aa).

Cystine bridges form between cysteine 2–cysteine 17, cysteine 9–cysteine 22, and cysteine 16–cysteine 27. Position 33 is a tryptophan amide (tryptophan 33).

As to expression, expressed by the venom gland.

The protein localises to the secreted. Blocks transient outward voltage-gated potassium channels in rat ventricular myocytes (thus prolonging action-potential duration) and rat Kv4.2/KCNA4 channels expressed in Xenopus oocytes. Is also a weak blocker of calcium channels in rat cerebellar granule cells. In Heteropoda venatoria (Brown huntsman spider), this protein is Kappa-sparatoxin-Hv1a.